The following is a 539-amino-acid chain: Membrane protein insertase YidC (539 aa).

The helical transmembrane segment at 7 to 27 threads the bilayer; sequence IIAIALSFVVLVGWSYLADHM. Positions 32–64 are disordered; sequence QPAPQAQQEETAPSASQAAPQSASQAAAPAPRA. Transmembrane regions (helical) follow at residues 347 to 367, 418 to 438, and 498 to 518; these read YVGNYGVAIILLTVVIKLVFW, GGCLPMLVQIPVFFGLYQALL, and IMMFMPVVFTFMFLSFPSGLV.

Belongs to the OXA1/ALB3/YidC family. Type 1 subfamily. In terms of assembly, interacts with the Sec translocase complex via SecD. Specifically interacts with transmembrane segments of nascent integral membrane proteins during membrane integration.

It localises to the cell inner membrane. Functionally, required for the insertion and/or proper folding and/or complex formation of integral membrane proteins into the membrane. Involved in integration of membrane proteins that insert both dependently and independently of the Sec translocase complex, as well as at least some lipoproteins. Aids folding of multispanning membrane proteins. In Nitratidesulfovibrio vulgaris (strain DSM 19637 / Miyazaki F) (Desulfovibrio vulgaris), this protein is Membrane protein insertase YidC.